The sequence spans 406 residues: Alpha-1-antitrypsin (406 aa).

An N-terminal signal peptide occupies residues 1–24 (MTSSISWGLLLLAGLCCLVPSFLA). S33 is modified (phosphoserine). N-linked (GlcNAc...) asparagine glycosylation is found at N59, N96, and N260. Residues 362–381 (GTTVLEAVPMSIPPDVCFKN) form an RCL region. Residue S372 is modified to Phosphoserine.

This sequence belongs to the serpin family. Interacts with CELA2A. Interacts with ERGIC3 and LMAN1/ERGIC53. Interacts with PRSS1/Trypsin. Plasma.

It localises to the secreted. In terms of biological role, inhibitor of serine proteases. Can inhibit elastase, trypsin, chymotrypsin and plasmin. In Meriones unguiculatus (Mongolian jird), this protein is Alpha-1-antitrypsin.